The following is a 236-amino-acid chain: uncharacterized protein (236 aa).

Belongs to the HyuE racemase family.

It is found in the cytoplasm. This is an uncharacterized protein from Schizosaccharomyces pombe (strain 972 / ATCC 24843) (Fission yeast).